The following is a 506-amino-acid chain: Probable E3 ubiquitin-protein ligase ARI14 (506 aa).

The TRIAD supradomain stretch occupies residues 79–308 (PDSSSEISLE…VDSGFCIKTE (230 aa)). The RING-type 1 zinc-finger motif lies at 83-140 (SEISLETDVYEFDGDNDLISMPFCSHKFDSKYWREYLEKNFYYVEKIQTTISCPDQDC). Zn(2+) is bound by residues Cys-106, His-108, Cys-135, Cys-140, Cys-180, Cys-185, Cys-207, Cys-209, Cys-214, Cys-217, His-222, Cys-227, Cys-258, Cys-261, Cys-277, Cys-279, Cys-284, Cys-287, His-294, and Cys-304. An IBR-type zinc finger spans residues 158–227 (EMYERYIWRS…RLESHRPVSC (70 aa)). The segment at 258 to 287 (CPHCLCSLESDTKMPQFLTCVCRLRFCSRC) adopts an RING-type 2; atypical zinc-finger fold. The RanBP2-type zinc-finger motif lies at 462–492 (GTGPFWYCDRCTYANTWEDNECEMCYDDSAS).

This sequence belongs to the RBR family. Ariadne subfamily. Requires Zn(2+) as cofactor. As to expression, mostly expressed in closed flowers and, to a lower extent, in pollen.

The catalysed reaction is [E2 ubiquitin-conjugating enzyme]-S-ubiquitinyl-L-cysteine + [acceptor protein]-L-lysine = [E2 ubiquitin-conjugating enzyme]-L-cysteine + [acceptor protein]-N(6)-ubiquitinyl-L-lysine.. It participates in protein modification; protein ubiquitination. Functionally, might act as an E3 ubiquitin-protein ligase, or as part of E3 complex, which accepts ubiquitin from specific E2 ubiquitin-conjugating enzymes and then transfers it to substrates. Negatively regulates male gametophyte formation and double fertilization. The chain is Probable E3 ubiquitin-protein ligase ARI14 from Arabidopsis thaliana (Mouse-ear cress).